Here is a 167-residue protein sequence, read N- to C-terminus: Iron-sulfur cluster assembly protein 1 (167 aa).

The N-terminal 50 residues, 1–50 (MMLKQAAKKALGLTSRQSTPWSVGILRTYHENVIDHYDNPRNVGSFDKND), are a transit peptide targeting the mitochondrion.

This sequence belongs to the NifU family. In terms of assembly, component of the core Fe-S cluster (ISC) assembly machinery. Interacts with HSCB. [2Fe-2S] cluster is required as a cofactor. As to expression, expressed in roots, stems, leaves, flowers, pollen and siliques.

The protein localises to the mitochondrion matrix. It is found in the cytoplasm. The protein resides in the cytosol. It participates in cofactor biosynthesis; iron-sulfur cluster biosynthesis. In terms of biological role, scaffold protein for the de novo synthesis of iron-sulfur (Fe-S) clusters within mitochondria, which is required for maturation of both mitochondrial and cytoplasmic [2Fe-2S] and [4Fe-4S] proteins. First, a [2Fe-2S] cluster is transiently assembled on the scaffold protein ISCU (ISU1, ISU2 or ISU3). In a second step, the cluster is released from ISCU, transferred to a glutaredoxin, followed by the formation of mitochondrial [2Fe-2S] proteins, the synthesis of [4Fe-4S] clusters and their target-specific insertion into the recipient apoproteins. Cluster assembly on ISCU depends on the function of the cysteine desulfurase complex NFS1-ISD11, which serves as the sulfur donor for cluster synthesis, the iron-binding protein frataxin as the putative iron donor, and the electron transfer chain comprised of ferredoxin reductase and ferredoxin, which receive their electrons from NADH. The protein is Iron-sulfur cluster assembly protein 1 (ISU1) of Arabidopsis thaliana (Mouse-ear cress).